The chain runs to 310 residues: Putative HTH-type transcriptional regulatory protein SSO0942 (310 aa).

Positions 125–180 constitute an HTH cro/C1-type domain; that stretch reads LKHKREEMGYSIGDVAKFLGVSRKAIYDYEKGDSDVSLEVAEKLIDLFGDDIIGDV. The H-T-H motif DNA-binding region spans 136-155; that stretch reads IGDVAKFLGVSRKAIYDYEK.

The protein is Putative HTH-type transcriptional regulatory protein SSO0942 of Saccharolobus solfataricus (strain ATCC 35092 / DSM 1617 / JCM 11322 / P2) (Sulfolobus solfataricus).